The chain runs to 103 residues: UPF0145 protein BCE_5284 (103 aa).

Belongs to the UPF0145 family.

This is UPF0145 protein BCE_5284 from Bacillus cereus (strain ATCC 10987 / NRS 248).